The following is a 60-amino-acid chain: Small ribosomal subunit protein bS21 (60 aa).

Positions 41–60 (PEEKRKRKAIARRRQRSRRR) are disordered. Residues 45–60 (RKRKAIARRRQRSRRR) are compositionally biased toward basic residues.

It belongs to the bacterial ribosomal protein bS21 family.

This is Small ribosomal subunit protein bS21 from Gloeothece citriformis (strain PCC 7424) (Cyanothece sp. (strain PCC 7424)).